Here is a 302-residue protein sequence, read N- to C-terminus: Methionyl-tRNA formyltransferase (302 aa).

107-110 is a binding site for (6S)-5,6,7,8-tetrahydrofolate; sequence SDLP.

This sequence belongs to the Fmt family.

The catalysed reaction is L-methionyl-tRNA(fMet) + (6R)-10-formyltetrahydrofolate = N-formyl-L-methionyl-tRNA(fMet) + (6S)-5,6,7,8-tetrahydrofolate + H(+). In terms of biological role, attaches a formyl group to the free amino group of methionyl-tRNA(fMet). The formyl group appears to play a dual role in the initiator identity of N-formylmethionyl-tRNA by promoting its recognition by IF2 and preventing the misappropriation of this tRNA by the elongation apparatus. This chain is Methionyl-tRNA formyltransferase, found in Rickettsia massiliae (strain Mtu5).